The sequence spans 476 residues: Ribulose bisphosphate carboxylase large chain (476 aa).

Substrate-binding residues include Asn124 and Thr174. The active-site Proton acceptor is the Lys176. Lys178 is a binding site for substrate. Positions 202, 204, and 205 each coordinate Mg(2+). Lys202 is subject to N6-carboxylysine. The active-site Proton acceptor is the His295. Substrate is bound by residues Arg296, His328, and Ser380.

This sequence belongs to the RuBisCO large chain family. Type I subfamily. Heterohexadecamer of 8 large chains and 8 small chains; disulfide-linked. The disulfide link is formed within the large subunit homodimers. It depends on Mg(2+) as a cofactor. In terms of processing, the disulfide bond which can form in the large chain dimeric partners within the hexadecamer appears to be associated with oxidative stress and protein turnover.

The protein resides in the carboxysome. It carries out the reaction 2 (2R)-3-phosphoglycerate + 2 H(+) = D-ribulose 1,5-bisphosphate + CO2 + H2O. It catalyses the reaction D-ribulose 1,5-bisphosphate + O2 = 2-phosphoglycolate + (2R)-3-phosphoglycerate + 2 H(+). RuBisCO catalyzes two reactions: the carboxylation of D-ribulose 1,5-bisphosphate, the primary event in carbon dioxide fixation, as well as the oxidative fragmentation of the pentose substrate in the photorespiration process. Both reactions occur simultaneously and in competition at the same active site. This chain is Ribulose bisphosphate carboxylase large chain, found in Trichodesmium erythraeum (strain IMS101).